The primary structure comprises 1118 residues: Sodium-driven chloride bicarbonate exchanger (1118 aa).

Disordered stretches follow at residues 1–23 (MEIKDQGAQMEPLLPTRNDEEAV), 58–96 (GRKSHRRHRHRGHKHRKRDRERDSGLEDGRESPSFDTPS), 245–312 (KQSE…PPHQ), and 457–476 (NGTAAHGEAEPHGGHSGPEL). Residues 1-509 (MEIKDQGAQM…DFRDAFSLQC (509 aa)) lie on the Cytoplasmic side of the membrane. Positions 59-76 (RKSHRRHRHRGHKHRKRD) are enriched in basic residues. The span at 77–90 (RERDSGLEDGRESP) shows a compositional bias: basic and acidic residues. Serine 89 carries the post-translational modification Phosphoserine. A Phosphothreonine modification is found at threonine 94. The segment covering 248–264 (EPNSMDKNAGQVVSPQS) has biased composition (polar residues). A Phosphoserine modification is found at serine 276. A helical membrane pass occupies residues 510–530 (LASFLFLYCACMSPVITFGGL). At 531 to 538 (LGEATEGR) the chain is on the extracellular side. Residues 539–559 (ISAIESLFGASMTGIAYSLFG) form a helical membrane-spanning segment. At 560–562 (GQP) the chain is on the cytoplasmic side. Residues 563–583 (LTILGSTGPVLVFEKILFKFC) traverse the membrane as a helical segment. Over 584–596 (KEYGLSYLSLRAS) the chain is Extracellular. Residues 597 to 617 (IGLWTATLCIILVATDASSLV) traverse the membrane as a helical segment. The Cytoplasmic segment spans residues 618 to 626 (CYITRFTEE). Residues 627–647 (AFASLICIIFIYEALEKLFEL) form a helical membrane-spanning segment. Residues 648–720 (SEAYPINMHN…VGRACGHDHP (73 aa)) lie on the Extracellular side of the membrane. N-linked (GlcNAc...) asparagine glycans are attached at residues asparagine 674, asparagine 677, asparagine 687, and asparagine 697. Residues 721 to 741 (YVPDVLFWSVILFFSTVTLSA) traverse the membrane as a helical segment. Over 742–762 (TLKQFKTSRYFPTKVRSIVSD) the chain is Cytoplasmic. The chain crosses the membrane as a helical span at residues 763-783 (FAVFLTILCMVLIDYAIGIPS). At 784–809 (PKLQVPSVFKPTRDDRGWFVTPLGPN) the chain is on the extracellular side. A helical transmembrane segment spans residues 810–830 (PWWTVIAAIIPALLCTILIFM). The Cytoplasmic portion of the chain corresponds to 831–855 (DQQITAVIINRKEHKLKKGCGYHLD). The chain crosses the membrane as a helical span at residues 856 to 876 (LLMVAVMLGVCSIMGLPWFVA). The Extracellular segment spans residues 877–912 (ATVLSITHVNSLKLESECSAPGEQPKFLGIREQRVT). Residues 913–933 (GLMIFILMGSSVFMTSILKFI) traverse the membrane as a helical segment. Over 934–935 (PM) the chain is Cytoplasmic. The helical transmembrane segment at 936–956 (PVLYGVFLYMGASSLKGIQFF) threads the bilayer. The Extracellular portion of the chain corresponds to 957–998 (DRIKLFWMPAKHQPDFIYLRHVPLRKVHLFTIIQMSCLGLLW). The chain crosses the membrane as a helical span at residues 999-1019 (IIKVSRAAIVFPMMVLALVFV). Topologically, residues 1020-1118 (RKLMDLLFTK…SSFPSKSSPS (99 aa)) are cytoplasmic. Phosphoserine occurs at positions 1057 and 1085.

This sequence belongs to the anion exchanger (TC 2.A.31) family. Predominantly expressed in the brain.

Its subcellular location is the basolateral cell membrane. It is found in the apical cell membrane. It localises to the cell projection. The protein resides in the dendrite. The protein localises to the axon. Its subcellular location is the perikaryon. It is found in the presynapse. It localises to the postsynapse. The catalysed reaction is 2 hydrogencarbonate(out) + chloride(in) + Na(+)(out) = 2 hydrogencarbonate(in) + chloride(out) + Na(+)(in). Functionally, sodium/bicarbonate cotransporter which plays an important role in regulating intracellular pH. Has been shown to act as a sodium/bicarbonate cotransporter in exchange for intracellular chloride. Has also been shown to act as a sodium/biocarbonate cotransporter which does not couple net influx of bicarbonate to net efflux of chloride, with the observed chloride efflux being due to chloride self-exchange. Controls neuronal pH and may contribute to the secretion of cerebrospinal fluid. Acting on presynaptic intracellular pH, it promotes GABA release, reduces the excitability of CA1 pyramidal neurons, and modulates short-term synaptic plasticity. Required in retinal cells to maintain normal pH which is necessary for normal vision. In the kidney, likely to mediate bicarbonate reclamation in the apical membrane of the proximal tubules. This chain is Sodium-driven chloride bicarbonate exchanger, found in Homo sapiens (Human).